We begin with the raw amino-acid sequence, 431 residues long: Enolase (431 aa).

Glutamine 163 lines the (2R)-2-phosphoglycerate pocket. The Proton donor role is filled by glutamate 205. Mg(2+) contacts are provided by aspartate 242, glutamate 288, and aspartate 315. Lysine 340, arginine 369, serine 370, and lysine 391 together coordinate (2R)-2-phosphoglycerate. Catalysis depends on lysine 340, which acts as the Proton acceptor.

The protein belongs to the enolase family. Mg(2+) serves as cofactor.

It localises to the cytoplasm. The protein resides in the secreted. The protein localises to the cell surface. The enzyme catalyses (2R)-2-phosphoglycerate = phosphoenolpyruvate + H2O. Its pathway is carbohydrate degradation; glycolysis; pyruvate from D-glyceraldehyde 3-phosphate: step 4/5. Its function is as follows. Catalyzes the reversible conversion of 2-phosphoglycerate (2-PG) into phosphoenolpyruvate (PEP). It is essential for the degradation of carbohydrates via glycolysis. This Trichlorobacter lovleyi (strain ATCC BAA-1151 / DSM 17278 / SZ) (Geobacter lovleyi) protein is Enolase.